The following is a 335-amino-acid chain: Fructose-1,6-bisphosphatase class 1 (335 aa).

Residues Glu-93, Asp-117, Leu-119, and Asp-120 each coordinate Mg(2+). Substrate is bound by residues 120–123, Asn-213, Tyr-244, and Lys-274; that span reads DGSS. Glu-280 provides a ligand contact to Mg(2+).

This sequence belongs to the FBPase class 1 family. In terms of assembly, homotetramer. Mg(2+) serves as cofactor.

It is found in the cytoplasm. The enzyme catalyses beta-D-fructose 1,6-bisphosphate + H2O = beta-D-fructose 6-phosphate + phosphate. It participates in carbohydrate biosynthesis; gluconeogenesis. This chain is Fructose-1,6-bisphosphatase class 1, found in Flavobacterium psychrophilum (strain ATCC 49511 / DSM 21280 / CIP 103535 / JIP02/86).